A 269-amino-acid chain; its full sequence is Putative pyridoxine kinase (269 aa).

Asparagine 139 contributes to the ATP binding site. Glutamate 142 contributes to the Mg(2+) binding site. ATP-binding positions include 176–180 (KGGGR), aspartate 189, valine 205, glycine 214, and lysine 239.

It belongs to the ThiD family.

The catalysed reaction is pyridoxal + ATP = pyridoxal 5'-phosphate + ADP + H(+). Its function is as follows. Phosphorylates B6 vitamers; functions in a salvage pathway. Uses pyridoxal, pyridoxine, and pyridoxamine as substrates. The polypeptide is Putative pyridoxine kinase (pdxK) (Treponema pallidum (strain Nichols)).